A 262-amino-acid polypeptide reads, in one-letter code: Translation initiation factor 2 subunit alpha (262 aa).

The S1 motif domain maps to 15–86 (GELVVGTVHK…RKGHVDVSMK (72 aa)).

This sequence belongs to the eIF-2-alpha family. As to quaternary structure, heterotrimer composed of an alpha, a beta and a gamma chain.

Functionally, eIF-2 functions in the early steps of protein synthesis by forming a ternary complex with GTP and initiator tRNA. In Methanothermobacter thermautotrophicus (strain ATCC 29096 / DSM 1053 / JCM 10044 / NBRC 100330 / Delta H) (Methanobacterium thermoautotrophicum), this protein is Translation initiation factor 2 subunit alpha (eif2a).